We begin with the raw amino-acid sequence, 342 residues long: MAVVSMKQLLESGVHFGHQTRRWNPKMAPYIFTSRKDIHIIDLKRTALEIEKAYAALYDIAKDGGTVLFVGTKKQASEAIKEEAIRAGQFYVDHRWLGGTLTNFKTIRQRIKLLHSLYAAEADGTWAKLPKKEVLGLSRQRIKLERFLGGIKDMQRIPQALFVVDPRTEEIAVKEARKLGIPVFGIVDTNCDPDLVDYIIPANDDAIRAVKLLTWVMANAVVEANGGVVEKYEDEENAPFEQDEPRKPSQKPKQNRPENKPRFDKQAPRAAAKPEVKAEVKPEVKPEVKVEAKVAPKVVAEVKPTEDLSTLKVAELKELAKAKGIENYSKLRKAELVEALSK.

The interval 235-283 (EENAPFEQDEPRKPSQKPKQNRPENKPRFDKQAPRAAAKPEVKAEVKPE) is disordered. Residues 255-283 (NRPENKPRFDKQAPRAAAKPEVKAEVKPE) show a composition bias toward basic and acidic residues.

The protein belongs to the universal ribosomal protein uS2 family.

The sequence is that of Small ribosomal subunit protein uS2 from Acholeplasma laidlawii (strain PG-8A).